We begin with the raw amino-acid sequence, 247 residues long: Enolase-phosphatase E1 (247 aa).

Asp12 and Glu14 together coordinate Mg(2+). Substrate contacts are provided by residues 141–142 (SS) and Lys175. Asp200 is a Mg(2+) binding site.

It belongs to the HAD-like hydrolase superfamily. MasA/MtnC family. In terms of assembly, monomer. It depends on Mg(2+) as a cofactor.

It is found in the cytoplasm. The protein localises to the nucleus. The catalysed reaction is 5-methylsulfanyl-2,3-dioxopentyl phosphate + H2O = 1,2-dihydroxy-5-(methylsulfanyl)pent-1-en-3-one + phosphate. It functions in the pathway amino-acid biosynthesis; L-methionine biosynthesis via salvage pathway; L-methionine from S-methyl-5-thio-alpha-D-ribose 1-phosphate: step 3/6. The protein operates within amino-acid biosynthesis; L-methionine biosynthesis via salvage pathway; L-methionine from S-methyl-5-thio-alpha-D-ribose 1-phosphate: step 4/6. Bifunctional enzyme that catalyzes the enolization of 2,3-diketo-5-methylthiopentyl-1-phosphate (DK-MTP-1-P) into the intermediate 2-hydroxy-3-keto-5-methylthiopentenyl-1-phosphate (HK-MTPenyl-1-P), which is then dephosphorylated to form the acireductone 1,2-dihydroxy-3-keto-5-methylthiopentene (DHK-MTPene). The protein is Enolase-phosphatase E1 of Drosophila willistoni (Fruit fly).